Here is a 289-residue protein sequence, read N- to C-terminus: MTSNVSAITEASTSKFVRIKEGDGEVQLHYNDAGQGAETVVMLHGSGPGASGWANFNRNVEPLVAAGYRVILLDCLGWSKSDPVVCDGSRSELNARSLKGLLDALDIERVHIIGNSMGGHSAVAFALANPQRVGKLVLMGGGTGGPSQFVPMPTEGIKLLQGLYREPTIDNLKRMMNVFVFDASALTDDLMQARLDNMLARRDHLENFVKSLAANPKQFNDFGPRLGEIAAPTLVIWGRDDRFVPMDVGLRLVAGMQNAEMHIFSRCGHWAQWEHAEKFNRMVVDFLAH.

An AB hydrolase-1 domain is found at T39 to H275. H269 acts as the Proton acceptor in catalysis.

It belongs to the AB hydrolase superfamily. MhpC family. In terms of assembly, homodimer.

It catalyses the reaction (2Z,4E)-2-hydroxy-6-oxonona-2,4-dienedioate + H2O = (2Z)-2-hydroxypenta-2,4-dienoate + succinate + H(+). It carries out the reaction (2Z,4E,7E)-2-hydroxy-6-oxonona-2,4,7-trienedioate + H2O = (2Z)-2-hydroxypenta-2,4-dienoate + fumarate + H(+). It participates in aromatic compound metabolism; 3-phenylpropanoate degradation. Catalyzes the cleavage of the C5-C6 bond of 2-hydroxy-6-oxononadienedioate and 2-hydroxy-6-oxononatrienedioate, a dienol ring fission product of the bacterial meta-cleavage pathway for degradation of phenylpropionic acid. The chain is 2-hydroxy-6-oxononadienedioate/2-hydroxy-6-oxononatrienedioate hydrolase from Paraburkholderia xenovorans (strain LB400).